The chain runs to 378 residues: Spermidine/putrescine import ATP-binding protein PotA (378 aa).

Positions 18 to 248 (VQLAGIRKCF…PKNLFVTGFI (231 aa)) constitute an ABC transporter domain. Residue 50-57 (GPSGCGKT) participates in ATP binding.

It belongs to the ABC transporter superfamily. Spermidine/putrescine importer (TC 3.A.1.11.1) family. As to quaternary structure, the complex is composed of two ATP-binding proteins (PotA), two transmembrane proteins (PotB and PotC) and a solute-binding protein (PotD).

Its subcellular location is the cell inner membrane. The enzyme catalyses ATP + H2O + polyamine-[polyamine-binding protein]Side 1 = ADP + phosphate + polyamineSide 2 + [polyamine-binding protein]Side 1.. Functionally, part of the ABC transporter complex PotABCD involved in spermidine/putrescine import. Responsible for energy coupling to the transport system. This Shigella flexneri serotype 5b (strain 8401) protein is Spermidine/putrescine import ATP-binding protein PotA.